Consider the following 105-residue polypeptide: Prothymosin alpha-A (105 aa).

Residues 1–30 (MADTKVDTSKEVSAKDLKEKKQVEEAENGK) are compositionally biased toward basic and acidic residues. Residues 1-105 (MADTKVDTSK…VDPKKQKTDV (105 aa)) are disordered. Acidic residues-rich tracts occupy residues 39 to 78 (ENEE…EEAE) and 87 to 96 (EDDDDDEDDV).

Belongs to the pro/parathymosin family. In terms of tissue distribution, at the 20-somite stage (18 hpf), expressed on the dorsal side of the embryo in the developing central and peripheral nervous system (CNS and PNS), in the tail bud and the pronephric ducts. In the PNS, expressed in the otic vesicle, trigeminal ganglion and the anterior lateral line placode. Localized throughout the hindbrain, with highest expression in rhombomeres 3 and 4. In the head, expressed in the olfactory placode and in the diencephalic region. At the end of the segmentation period (20 hpf), expression begins in the newly forming endodermal pouches, and weakly in the pharyngeal arch precursor cells. During the early pharyngula period, expressed in the pectoral fin bud, the developing retina, and still present in the central nervous system and endodermal pouches. In the tail, expressed in the spinal cord and posterior lateral line precursors. Weakly expressed in the pronephric ducts, only in the corpuscles of Stanius. At 48 hpf, still expressed in the retina and brain, where expression is almost uniform. At this stage, expression is decreased in the spinal cord and is absent from the lateral line cells and pronephric ducts, but appears in the intestine and continues in the pharyngeal arches. In 72 hpf embryos, expression in the brain remains uniform but is restricted to amacrine cells in the retina. In the pharyngeal arches, expression continues to be limited to the ectodermal and endodermal covering cells.

The protein resides in the nucleus. This is Prothymosin alpha-A (ptmaa) from Danio rerio (Zebrafish).